We begin with the raw amino-acid sequence, 160 residues long: Tic20 family protein (160 aa).

4 helical membrane passes run 13–33 (FFSA…GGFL), 53–73 (FYYQ…MAVV), 87–107 (MQAI…AYVI), and 122–142 (NFAF…SVLG).

It belongs to the Tic20 family.

It is found in the cell membrane. In Synechocystis sp. (strain ATCC 27184 / PCC 6803 / Kazusa), this protein is Tic20 family protein.